Consider the following 120-residue polypeptide: Seripauperin-13 (120 aa).

Positions 1–25 (MVKLTSIAAGVAAIAATASATTTLA) are cleaved as a signal peptide.

The protein belongs to the SRP1/TIP1 family. Seripauperin subfamily.

In Saccharomyces cerevisiae (strain ATCC 204508 / S288c) (Baker's yeast), this protein is Seripauperin-13 (PAU13).